The following is a 288-amino-acid chain: Fructokinase (288 aa).

Thr131 serves as a coordination point for ATP. Zn(2+)-binding residues include His154, Cys169, His172, and Cys175. Residues Pro183 and 231-235 (GVMNQ) each bind ATP.

This sequence belongs to the ROK (NagC/XylR) family. Mg(2+) serves as cofactor.

The catalysed reaction is D-fructose + ATP = D-fructose 6-phosphate + ADP + H(+). With respect to regulation, inhibition by zinc ions. The sequence is that of Fructokinase (scrK) from Pediococcus pentosaceus.